A 525-amino-acid polypeptide reads, in one-letter code: Phosphoenolpyruvate carboxykinase (ATP) (525 aa).

Substrate-binding residues include Arg52, Tyr186, and Lys192. ATP-binding positions include Lys192, His211, and 228–236 (GLSGTGKTT). Residues Lys192 and His211 each contribute to the Mn(2+) site. Asp249 contacts Mn(2+). Residues Glu277, Arg314, 433–434 (RI), and Thr439 contribute to the ATP site. Arg314 contacts substrate.

Belongs to the phosphoenolpyruvate carboxykinase (ATP) family. Requires Mn(2+) as cofactor.

The protein localises to the cytoplasm. It carries out the reaction oxaloacetate + ATP = phosphoenolpyruvate + ADP + CO2. Its pathway is carbohydrate biosynthesis; gluconeogenesis. Its function is as follows. Involved in the gluconeogenesis. Catalyzes the conversion of oxaloacetate (OAA) to phosphoenolpyruvate (PEP) through direct phosphoryl transfer between the nucleoside triphosphate and OAA. This Fusobacterium nucleatum subsp. nucleatum (strain ATCC 25586 / DSM 15643 / BCRC 10681 / CIP 101130 / JCM 8532 / KCTC 2640 / LMG 13131 / VPI 4355) protein is Phosphoenolpyruvate carboxykinase (ATP).